The primary structure comprises 210 residues: Large ribosomal subunit protein uL3 (210 aa).

The protein belongs to the universal ribosomal protein uL3 family. Part of the 50S ribosomal subunit. Forms a cluster with proteins L14 and L19.

Functionally, one of the primary rRNA binding proteins, it binds directly near the 3'-end of the 23S rRNA, where it nucleates assembly of the 50S subunit. This chain is Large ribosomal subunit protein uL3, found in Caldicellulosiruptor bescii (strain ATCC BAA-1888 / DSM 6725 / KCTC 15123 / Z-1320) (Anaerocellum thermophilum).